Here is a 258-residue protein sequence, read N- to C-terminus: Aspartate/glutamate leucyltransferase (258 aa).

This sequence belongs to the R-transferase family. Bpt subfamily.

Its subcellular location is the cytoplasm. It catalyses the reaction N-terminal L-glutamyl-[protein] + L-leucyl-tRNA(Leu) = N-terminal L-leucyl-L-glutamyl-[protein] + tRNA(Leu) + H(+). The enzyme catalyses N-terminal L-aspartyl-[protein] + L-leucyl-tRNA(Leu) = N-terminal L-leucyl-L-aspartyl-[protein] + tRNA(Leu) + H(+). In terms of biological role, functions in the N-end rule pathway of protein degradation where it conjugates Leu from its aminoacyl-tRNA to the N-termini of proteins containing an N-terminal aspartate or glutamate. The chain is Aspartate/glutamate leucyltransferase from Bradyrhizobium diazoefficiens (strain JCM 10833 / BCRC 13528 / IAM 13628 / NBRC 14792 / USDA 110).